We begin with the raw amino-acid sequence, 253 residues long: Major prion protein (253 aa).

A signal peptide spans 1 to 22 (MANLGCWMLVLFVATWSDLGLC). The interaction with GRB2, ERI3 and SYN1 stretch occupies residues 23–230 (KKRPKPGGWN…ESQAYYQRGS (208 aa)). Residues 26–108 (PKPGGWNTGG…WNKPSKPKTS (83 aa)) form a disordered region. 5 tandem repeats follow at residues 51-59 (PQGGGGWGQ), 60-67 (PHGGGWGQ), 68-75 (PHGGGWGQ), 76-83 (PHGGGWGQ), and 84-91 (PHGGGWGQ). The segment at 51-91 (PQGGGGWGQPHGGGWGQPHGGGWGQPHGGGWGQPHGGGWGQ) is 5 X 8 AA tandem repeats of P-H-G-G-G-W-G-Q. Residues 52–95 (QGGGGWGQPHGGGWGQPHGGGWGQPHGGGWGQPHGGGWGQGGGT) are compositionally biased toward gly residues. Cu(2+)-binding residues include His61, Gly62, Gly63, His69, Gly70, Gly71, His77, Gly78, Gly79, His85, Gly86, and Gly87. Cys179 and Cys214 are oxidised to a cystine. Asn181 and Asn197 each carry an N-linked (GlcNAc...) asparagine glycan. The GPI-anchor amidated serine moiety is linked to residue Ser230. Residues 231-253 (SMVFFSSPPVILLISFLIFLIVG) constitute a propeptide, removed in mature form.

The protein belongs to the prion family. In terms of assembly, monomer and homodimer. Has a tendency to aggregate into amyloid fibrils containing a cross-beta spine, formed by a steric zipper of superposed beta-strands. Soluble oligomers may represent an intermediate stage on the path to fibril formation. Copper binding may promote oligomerization. Interacts with GRB2, APP, ERI3/PRNPIP and SYN1. Mislocalized cytosolically exposed PrP interacts with MGRN1; this interaction alters MGRN1 subcellular location and causes lysosomal enlargement. Interacts with KIAA1191.

It localises to the cell membrane. The protein resides in the golgi apparatus. Its function is as follows. Its primary physiological function is unclear. Has cytoprotective activity against internal or environmental stresses. May play a role in neuronal development and synaptic plasticity. May be required for neuronal myelin sheath maintenance. May play a role in iron uptake and iron homeostasis. Soluble oligomers are toxic to cultured neuroblastoma cells and induce apoptosis (in vitro). Association with GPC1 (via its heparan sulfate chains) targets PRNP to lipid rafts. Also provides Cu(2+) or Zn(2+) for the ascorbate-mediated GPC1 deaminase degradation of its heparan sulfate side chains. The sequence is that of Major prion protein (PRNP) from Trachypithecus francoisi (Francois' leaf monkey).